Here is a 385-residue protein sequence, read N- to C-terminus: Guanine nucleotide-binding protein alpha-5 subunit (385 aa).

A lipid anchor (N-myristoyl glycine) is attached at Gly2. Cys6 is lipidated: S-palmitoyl cysteine. Residues 32-385 (RKIKMLLLGV…GKNYEDTNLE (354 aa)) form the G-alpha domain. The tract at residues 35-48 (KMLLLGVTDSGKST) is G1 motif. GTP-binding positions include 40 to 47 (GVTDSGKS), 174 to 180 (IHMRQTT), 199 to 203 (DVGGQ), 298 to 301 (NKKD), and Ala357. Mg(2+) is bound by residues Ser47 and Thr180. Positions 172–180 (DLIHMRQTT) are G2 motif. The G3 motif stretch occupies residues 195-204 (IRLIDVGGQK). The tract at residues 294 to 301 (MLFLNKKD) is G4 motif. Residues 355-360 (TQATVT) form a G5 motif region.

The protein belongs to the G-alpha family. In terms of assembly, g proteins are composed of 3 units; alpha, beta and gamma. The alpha chain contains the guanine nucleotide binding site.

Its function is as follows. Guanine nucleotide-binding proteins (G proteins) are involved as modulators or transducers in various transmembrane signaling systems. The protein is Guanine nucleotide-binding protein alpha-5 subunit (gpa-5) of Caenorhabditis elegans.